An 898-amino-acid chain; its full sequence is Phosphoenolpyruvate carboxylase (898 aa).

Residues His138 and Lys561 contribute to the active site.

It belongs to the PEPCase type 1 family. Mg(2+) serves as cofactor.

The enzyme catalyses oxaloacetate + phosphate = phosphoenolpyruvate + hydrogencarbonate. Forms oxaloacetate, a four-carbon dicarboxylic acid source for the tricarboxylic acid cycle. This is Phosphoenolpyruvate carboxylase from Streptococcus pneumoniae serotype 4 (strain ATCC BAA-334 / TIGR4).